Consider the following 96-residue polypeptide: Large ribosomal subunit protein uL23 (96 aa).

It belongs to the universal ribosomal protein uL23 family. In terms of assembly, part of the 50S ribosomal subunit. Contacts protein L29, and trigger factor when it is bound to the ribosome.

Its function is as follows. One of the early assembly proteins it binds 23S rRNA. One of the proteins that surrounds the polypeptide exit tunnel on the outside of the ribosome. Forms the main docking site for trigger factor binding to the ribosome. The polypeptide is Large ribosomal subunit protein uL23 (Maridesulfovibrio salexigens (strain ATCC 14822 / DSM 2638 / NCIMB 8403 / VKM B-1763) (Desulfovibrio salexigens)).